Here is a 344-residue protein sequence, read N- to C-terminus: Melanocyte-stimulating hormone receptor (344 aa).

Residues 1 to 37 are Extracellular-facing; it reads MPMQGAQRKLLGSLNSTPTATSNLGLAANHTGAPCLE. Asn-29 carries an N-linked (GlcNAc...) asparagine glycan. The chain crosses the membrane as a helical span at residues 38–63; it reads VPIPDGLFLSLGLVSLVENVLVVAAI. The Cytoplasmic portion of the chain corresponds to 64–72; the sequence is AKNRNLHSS. Residues 73 to 93 traverse the membrane as a helical segment; that stretch reads MYCFICCLAVSDLLVSGSNML. Over 94–118 the chain is Extracellular; it reads ETAIILLLEAGALVTRASVVQQLHN. Residues 119-140 traverse the membrane as a helical segment; that stretch reads TIDVLTCSSMLCSLCFLGAIAV. Residues 141 to 163 are Cytoplasmic-facing; sequence DRYISIFYALRYHSIMTLPRAQR. Residues 164–183 traverse the membrane as a helical segment; that stretch reads AIAAIWVASVLSSTLFITYY. At 184 to 191 the chain is on the extracellular side; sequence DHAAVLLC. The helical transmembrane segment at 192–211 threads the bilayer; sequence LVVFFLAMLVLMAVLYVHML. Topologically, residues 212–240 are cytoplasmic; sequence ARACQHAQGIIRLHKRQPPAHKGFGLRGA. The helical transmembrane segment at 241-266 threads the bilayer; the sequence is ATLTILLGIFFLCWGPFFLHLTLVVF. The Extracellular portion of the chain corresponds to 267–279; sequence CPQHMTCSCIFKN. A helical transmembrane segment spans residues 280–300; that stretch reads FKVFLTLIICNTIIDPLIYAF. Topologically, residues 301-344 are cytoplasmic; sequence RSQELRRTLKEVLLCSRWPGCWAEGGGDSVWPGSCVTLRGPLPP. Cys-315 is lipidated: S-palmitoyl cysteine.

Belongs to the G-protein coupled receptor 1 family. In terms of assembly, interacts with MGRN1, but does not undergo MGRN1-mediated ubiquitination; this interaction competes with GNAS-binding and thus inhibits agonist-induced cAMP production. Interacts with OPN3; the interaction results in a decrease in MC1R-mediated cAMP signaling and ultimately a decrease in melanin production in melanocytes.

The protein resides in the cell membrane. In terms of biological role, receptor for MSH (alpha, beta and gamma) and ACTH. The activity of this receptor is mediated by G proteins which activate adenylate cyclase. Mediates melanogenesis, the production of eumelanin (black/brown) and phaeomelanin (red/yellow), via regulation of cAMP signaling in melanocytes. The sequence is that of Melanocyte-stimulating hormone receptor (MC1R) from Callimico goeldii (Goeldi's marmoset).